The chain runs to 431 residues: Beta-lactamase hydrolase-like protein (431 aa).

Zn(2+)-binding residues include His212, His214, and His286. A substrate-binding site is contributed by Asp309.

This sequence belongs to the metallo-beta-lactamase superfamily. Requires Zn(2+) as cofactor.

Its function is as follows. Could play a role in cell adherence or biofilm development. The sequence is that of Beta-lactamase hydrolase-like protein from Xylella fastidiosa (strain 9a5c).